The sequence spans 617 residues: 5-hydroxytryptamine receptor 2B (617 aa).

The Extracellular segment spans residues 1–95; that stretch reads MLKTVTTAMA…LLVKMIAMAV (95 aa). N-linked (GlcNAc...) asparagine glycans are attached at residues asparagine 31, asparagine 41, asparagine 51, and asparagine 58. A helical transmembrane segment spans residues 96–116; the sequence is VLGLMILVTIIGNVFVIAAII. At 117 to 128 the chain is on the cytoplasmic side; that stretch reads LERNLQNVANYL. A helical transmembrane segment spans residues 129-149; it reads VASLAVADLFVACLVMPLGAV. The Extracellular segment spans residues 150–164; the sequence is YEISNGWILGPELCD. Cysteines 163 and 242 form a disulfide. The helical transmembrane segment at 165–185 threads the bilayer; that stretch reads IWTSCDVLCCTASILHLVAIA. Residues 186–205 are Cytoplasmic-facing; that stretch reads ADRYWTVTNIDYNNLRTPRR. The chain crosses the membrane as a helical span at residues 206–226; that stretch reads VFLMIFCVWFAALIVSLAPQF. Over 227 to 256 the chain is Extracellular; that stretch reads GWKDPDYMKRIEEQHCMVSQDVGYQIFATC. A helical transmembrane segment spans residues 257 to 277; sequence CTFYVPLLVILFLYWKIYIIA. At 278–534 the chain is on the cytoplasmic side; it reads RKRIQRRAQK…EAKRERKAAQ (257 aa). A disordered region spans residues 309–336; it reads RSKRRAERKRLEAGERTPVDGDGTGGQL. Over residues 317–327 the composition is skewed to basic and acidic residues; sequence KRLEAGERTPV. The helical transmembrane segment at 535 to 555 threads the bilayer; it reads TLAIITGAFVICWLPFFVMAL. The Extracellular portion of the chain corresponds to 556 to 570; sequence TMSLCKECEIHTAVA. The helical transmembrane segment at 571 to 591 threads the bilayer; it reads SLFLWLGYFNSTLNPVIYTIF. Over 592–617 the chain is Cytoplasmic; the sequence is NPEFRRAFKRILFGRKAAARARSAKI.

This sequence belongs to the G-protein coupled receptor 1 family.

It localises to the cell membrane. This is one of the several different receptors for 5-hydroxytryptamine (serotonin), a biogenic hormone that functions as a neurotransmitter, a hormone, and a mitogen. The activity of this receptor is mediated by G proteins which inhibit adenylate cyclase. In Drosophila melanogaster (Fruit fly), this protein is 5-hydroxytryptamine receptor 2B (5-HT1B).